The sequence spans 273 residues: Ribosomal RNA small subunit methyltransferase A (273 aa).

Residues Asn25, Leu27, Gly52, Glu73, Asp99, and Asn118 each contribute to the S-adenosyl-L-methionine site.

The protein belongs to the class I-like SAM-binding methyltransferase superfamily. rRNA adenine N(6)-methyltransferase family. RsmA subfamily.

It is found in the cytoplasm. The enzyme catalyses adenosine(1518)/adenosine(1519) in 16S rRNA + 4 S-adenosyl-L-methionine = N(6)-dimethyladenosine(1518)/N(6)-dimethyladenosine(1519) in 16S rRNA + 4 S-adenosyl-L-homocysteine + 4 H(+). Its function is as follows. Specifically dimethylates two adjacent adenosines (A1518 and A1519) in the loop of a conserved hairpin near the 3'-end of 16S rRNA in the 30S particle. May play a critical role in biogenesis of 30S subunits. The protein is Ribosomal RNA small subunit methyltransferase A of Novosphingobium aromaticivorans (strain ATCC 700278 / DSM 12444 / CCUG 56034 / CIP 105152 / NBRC 16084 / F199).